A 576-amino-acid chain; its full sequence is uncharacterized protein (576 aa).

Residues 241 to 261 show a composition bias toward polar residues; it reads DNTKAPSPTNTAGSRELSTPA. Residues 241–270 form a disordered region; it reads DNTKAPSPTNTAGSRELSTPAGSPGKASLP.

This is an uncharacterized protein from Bacillus subtilis (strain 168).